We begin with the raw amino-acid sequence, 635 residues long: Sodium- and chloride-dependent creatine transporter 1 (635 aa).

Residues 1-28 (MAKKSAENGIYSVSGDEKKGPLIAPGPD) form a disordered region. Over 1–60 (MAKKSAENGIYSVSGDEKKGPLIAPGPDGAPAKGDGPVGLGTPGGRLAVPPRETWTRQMD) the chain is Cytoplasmic. The residue at position 42 (T42) is a Phosphothreonine. A helical transmembrane segment spans residues 61-81 (FIMSCVGFAVGLGNVWRFPYL). The Extracellular segment spans residues 82–87 (CYKNGG). The chain crosses the membrane as a helical span at residues 88 to 108 (GVFLIPYVLIALVGGIPIFFL). Residues 109-138 (EISLGQFMKAGSINVWNICPLFKGLGYASM) are Cytoplasmic-facing. The helical transmembrane segment at 139-159 (VIVFYCNTYYIMVLAWGFYYL) threads the bilayer. Residues 160 to 230 (VKSFTTTLPW…LSGGLEVPGA (71 aa)) are Extracellular-facing. N192 and N197 each carry an N-linked (GlcNAc...) asparagine glycan. A helical membrane pass occupies residues 231–251 (LNWEVTLCLLACWVLVYFCVW). Residues 252–269 (KGVKSTGKIVYFTATFPY) are Cytoplasmic-facing. Residues 270–290 (VVLVVLLVRGVLLPGALDGII) form a helical membrane-spanning segment. Over 291 to 304 (YYLKPDWSKLGSPQ) the chain is Extracellular. The chain crosses the membrane as a helical span at residues 305–325 (VWIDAGTQIFFSYAIGLGALT). The Cytoplasmic portion of the chain corresponds to 326-341 (ALGSYNRFNNNCYKDA). Residues 342 to 362 (IILALINSGTSFFAGFVVFSI) traverse the membrane as a helical segment. Topologically, residues 363 to 394 (LGFMAAEQGVHISKVAESGPGLAFIAYPRAVT) are extracellular. Residues 395 to 415 (LMPVAPLWAALFFFMLLLLGL) traverse the membrane as a helical segment. At 416-444 (DSQFVGVEGFITGLLDLLPASYYFRFQRE) the chain is on the cytoplasmic side. A helical membrane pass occupies residues 445 to 465 (ISVALCCALCFVIDLSMVTDG). Topologically, residues 466 to 479 (GMYVFQLFDYYSAS) are extracellular. Residues 480-500 (GTTLLWQAFWECVVVAWVYGA) traverse the membrane as a helical segment. The Cytoplasmic portion of the chain corresponds to 501–520 (DRFMDDIACMIGYRPCPWMK). Residues 521-541 (WCWSFFTPLVCMGIFIFNVVY) traverse the membrane as a helical segment. Residues 542–560 (YEPLVYNNTYVYPWWGEAM) are Extracellular-facing. N548 carries N-linked (GlcNAc...) asparagine glycosylation. Residues 561-581 (GWAFALSSMLCVPLHLLGCLL) traverse the membrane as a helical segment. Over 582-635 (RAKGTMAERWQHLTQPIWGLHHLEYRAQDADVRGLTTLTPVSESSKVVVVESVM) the chain is Cytoplasmic. Phosphothreonine occurs at positions 617 and 620. S623 carries the post-translational modification Phosphoserine.

It belongs to the sodium:neurotransmitter symporter (SNF) (TC 2.A.22) family. SLC6A8 subfamily. Glycosylated. In terms of tissue distribution, predominantly expressed in skeletal muscle and kidney. Also found in brain, heart, colon, testis and prostate.

It localises to the cell membrane. The protein resides in the apical cell membrane. It carries out the reaction creatine(out) + chloride(out) + 2 Na(+)(out) = creatine(in) + chloride(in) + 2 Na(+)(in). Functionally, creatine:sodium symporter which mediates the uptake of creatine. Plays an important role in supplying creatine to the brain via the blood-brain barrier. This Homo sapiens (Human) protein is Sodium- and chloride-dependent creatine transporter 1 (SLC6A8).